The following is a 213-amino-acid chain: Anti-sigma-E factor ChrR (213 aa).

Residues 2 to 85 are sufficient to bind sigma factor and inhibit its activity; that stretch reads TIRHHVSDAL…QIQRPAPARR (84 aa). Residues His6, His31, Cys35, Cys38, His141, His143, Glu147, and His177 each coordinate Zn(2+). The tract at residues 86 to 194 is required for response to singlet oxygen; sequence ADPRAPAPLA…LDCICLAATD (109 aa).

Belongs to the zinc-associated anti-sigma factor (ZAS) superfamily. As to quaternary structure, forms a 1:1 complex with cognate ECF RNA polymerase sigma factor RpoE; this inhibits the interaction of RpoE with the RNA polymerase catalytic core. Zn(2+) is required as a cofactor.

Anti-sigma factor that inhibits the activity of the extracytoplasmic function (ECF) sigma-E factor (RpoE), thereby indirectly regulating the transcription of the cycA and rpoE genes. ECF sigma factors are held in an inactive form by a cognate anti-sigma factor. The protein is Anti-sigma-E factor ChrR (chrR) of Cereibacter sphaeroides (strain ATCC 17023 / DSM 158 / JCM 6121 / CCUG 31486 / LMG 2827 / NBRC 12203 / NCIMB 8253 / ATH 2.4.1.) (Rhodobacter sphaeroides).